A 196-amino-acid polypeptide reads, in one-letter code: UPF0056 membrane protein BUsg_434 (196 aa).

The next 6 membrane-spanning stretches (helical) occupy residues threonine 8–leucine 28, isoleucine 45–leucine 65, threonine 71–serine 91, phenylalanine 105–leucine 125, methionine 134–leucine 154, and methionine 174–phenylalanine 194.

The protein belongs to the UPF0056 (MarC) family.

It is found in the cell membrane. This Buchnera aphidicola subsp. Schizaphis graminum (strain Sg) protein is UPF0056 membrane protein BUsg_434.